The sequence spans 152 residues: Neuromedin-S (152 aa).

Positions 1–26 (MKHPFPQFPPILVIYCFCMLQIPSSG) are cleaved as a signal peptide. 3 consecutive propeptides follow at residues 27 to 69 (ASPP…VYKR), 70 to 105 (FLFH…PSRR), and 106 to 108 (MKR). Residue Asn144 is modified to Asparagine amide. A propeptide spanning residues 147 to 152 (YTDKVQ) is cleaved from the precursor.

The protein belongs to the NmU family. Expressed in the CNS, spleen and testis. Specifically expressed in the suprachiasmatic nuclei (SCN) of the hypothalamus.

Its subcellular location is the secreted. Functionally, implicated in the regulation of circadian rhythms through autocrine and/or paracrine actions. Stimulates the contraction of rectum and elevation of blood pressure. The chain is Neuromedin-S (Nms) from Rattus norvegicus (Rat).